A 122-amino-acid chain; its full sequence is Ribosome-binding factor A (122 aa).

Belongs to the RbfA family. As to quaternary structure, monomer. Binds 30S ribosomal subunits, but not 50S ribosomal subunits or 70S ribosomes.

It is found in the cytoplasm. Functionally, one of several proteins that assist in the late maturation steps of the functional core of the 30S ribosomal subunit. Associates with free 30S ribosomal subunits (but not with 30S subunits that are part of 70S ribosomes or polysomes). Required for efficient processing of 16S rRNA. May interact with the 5'-terminal helix region of 16S rRNA. This Anaeromyxobacter sp. (strain Fw109-5) protein is Ribosome-binding factor A.